A 1025-amino-acid polypeptide reads, in one-letter code: Adenylate-forming reductase 03009 (1025 aa).

Residues 38-422 (FEFHAKSNPQ…LGRIDNQVKI (385 aa)) are adenylation (A) domain. AMP is bound by residues 332 to 333 (VT) and 412 to 415 (HLGR). The tract at residues 556–638 (SLGSTNTKIS…AILIWICVKK (83 aa)) is thiolation and peptide carrier (T) domain. Residues 682–900 (FIRRTAARVY…PPTKLWVKGV (219 aa)) are thioester reductase (TR) domain. NADP(+)-binding positions include 685 to 688 (RTAA), 769 to 771 (SAL), and Y840.

This sequence belongs to the adenylate-forming reductase family.

In terms of biological role, adenylate-forming reductase, a natural product biosynthesis enzyme that resembles non-ribosomal peptide synthetases, yet serves to modify one substrate, rather than to condense two or more building blocks. The A-domain preferentially accepts L-serine, L-alanine and L-valine as substrates. The natural product of the enzyme is not yet known. The protein is Adenylate-forming reductase 03009 of Coprinopsis cinerea (strain Okayama-7 / 130 / ATCC MYA-4618 / FGSC 9003) (Inky cap fungus).